The sequence spans 660 residues: Methionine--tRNA ligase (660 aa).

The short motif at 15–25 (YYPSDKLHIGH) is the 'HIGH' region element. The 'KMSKS' region motif lies at 311–315 (KMSKS). K314 contacts ATP. The disordered stretch occupies residues 535-554 (LMGGSKKPEEAPKDEKEESD). Over residues 540-550 (KKPEEAPKDEK) the composition is skewed to basic and acidic residues. The tRNA-binding domain occupies 560–660 (DFSKVELRIA…GALPNGSLVK (101 aa)).

The protein belongs to the class-I aminoacyl-tRNA synthetase family. MetG type 2B subfamily. In terms of assembly, homodimer.

It is found in the cytoplasm. The catalysed reaction is tRNA(Met) + L-methionine + ATP = L-methionyl-tRNA(Met) + AMP + diphosphate. Its function is as follows. Is required not only for elongation of protein synthesis but also for the initiation of all mRNA translation through initiator tRNA(fMet) aminoacylation. This chain is Methionine--tRNA ligase (metG), found in Halalkalibacterium halodurans (strain ATCC BAA-125 / DSM 18197 / FERM 7344 / JCM 9153 / C-125) (Bacillus halodurans).